We begin with the raw amino-acid sequence, 260 residues long: Electron transfer flavoprotein subunit beta (260 aa).

It belongs to the ETF beta-subunit/FixA family. In terms of assembly, heterodimer of an alpha and a beta subunit. FAD is required as a cofactor. AMP serves as cofactor.

In terms of biological role, the electron transfer flavoprotein serves as a specific electron acceptor for other dehydrogenases. It transfers the electrons to the main respiratory chain via ETF-ubiquinone oxidoreductase (ETF dehydrogenase). This Thermoanaerobacterium thermosaccharolyticum (strain ATCC 7956 / DSM 571 / NCIMB 9385 / NCA 3814 / NCTC 13789 / WDCM 00135 / 2032) (Clostridium thermosaccharolyticum) protein is Electron transfer flavoprotein subunit beta (etfB).